A 621-amino-acid chain; its full sequence is MVKFKREVNFSGGDRGVYRPDLIRNICIIAHIDHGKTTLVDRILEITNTVDRRKMREQYLDMMDIERERGITIKAQPVKVMYTAEDGNTYEINIIDTPGHVDFSYEVGRSMAACEGAILLVDATQGVEAQTVAHTYLAIEHDLEIIPVINKIDLPNANIEETALEIKDLLGVSENEILLVSAKEGTGVKELLEAIVKRVPPPKGDINGKLKALIFDAKYDNYKGVIVHVRLFDGQVKPGDKIMTFSNKKVYEVQEVGVFLPEMEPVDSLSAGEVGYIIAGIKEVSDARVGDTITSANDPVDEALPGYREIKPMVFAGMFPGLPEYYEELRKALEKLKLNDSALYFEPTMSPAMGFGFRCGFLGPLHMEVVRERIEREFDLAVILTAPNVRYRVKLRNGEEIEITDPSKFPDEGEILEAYEPYVDLSIITPSEYIGAIINLVQNEKRGELRITENAGKNRVILRFDAPLAEIIYDFFDRMKAVSRGYASMDYEFKEYRRSDLVKVTILVNKEPVDALSFIVHRSKAYQMARKIVEKLKDLIPRHQFQIPIQAKAGGRIIARADIKALRKDVLAKCYGGDVTRKMKLLEKQKEGKKKLREIGRVTIPQEAFLALLKIGGEDEK.

The tr-type G domain maps to 21-203 (DLIRNICIIA…AIVKRVPPPK (183 aa)). GTP-binding positions include 33-38 (DHGKTT) and 150-153 (NKID).

It belongs to the TRAFAC class translation factor GTPase superfamily. Classic translation factor GTPase family. LepA subfamily.

It is found in the cell inner membrane. It carries out the reaction GTP + H2O = GDP + phosphate + H(+). Required for accurate and efficient protein synthesis under certain stress conditions. May act as a fidelity factor of the translation reaction, by catalyzing a one-codon backward translocation of tRNAs on improperly translocated ribosomes. Back-translocation proceeds from a post-translocation (POST) complex to a pre-translocation (PRE) complex, thus giving elongation factor G a second chance to translocate the tRNAs correctly. Binds to ribosomes in a GTP-dependent manner. The sequence is that of Elongation factor 4 from Thermotoga maritima (strain ATCC 43589 / DSM 3109 / JCM 10099 / NBRC 100826 / MSB8).